A 217-amino-acid polypeptide reads, in one-letter code: 7-cyano-7-deazaguanine synthase (217 aa).

7–17 (LSGGMDSTTLL) provides a ligand contact to ATP. The Zn(2+) site is built by cysteine 183, cysteine 191, cysteine 194, and cysteine 197.

This sequence belongs to the QueC family. It depends on Zn(2+) as a cofactor.

It carries out the reaction 7-carboxy-7-deazaguanine + NH4(+) + ATP = 7-cyano-7-deazaguanine + ADP + phosphate + H2O + H(+). It functions in the pathway purine metabolism; 7-cyano-7-deazaguanine biosynthesis. Functionally, catalyzes the ATP-dependent conversion of 7-carboxy-7-deazaguanine (CDG) to 7-cyano-7-deazaguanine (preQ(0)). The sequence is that of 7-cyano-7-deazaguanine synthase from Methanoregula boonei (strain DSM 21154 / JCM 14090 / 6A8).